We begin with the raw amino-acid sequence, 434 residues long: Methylenetetrahydrofolate--tRNA-(uracil-5-)-methyltransferase TrmFO (434 aa).

10-15 (GAGLAG) contributes to the FAD binding site.

Belongs to the MnmG family. TrmFO subfamily. FAD is required as a cofactor.

The protein resides in the cytoplasm. The enzyme catalyses uridine(54) in tRNA + (6R)-5,10-methylene-5,6,7,8-tetrahydrofolate + NADH + H(+) = 5-methyluridine(54) in tRNA + (6S)-5,6,7,8-tetrahydrofolate + NAD(+). The catalysed reaction is uridine(54) in tRNA + (6R)-5,10-methylene-5,6,7,8-tetrahydrofolate + NADPH + H(+) = 5-methyluridine(54) in tRNA + (6S)-5,6,7,8-tetrahydrofolate + NADP(+). Catalyzes the folate-dependent formation of 5-methyl-uridine at position 54 (M-5-U54) in all tRNAs. The sequence is that of Methylenetetrahydrofolate--tRNA-(uracil-5-)-methyltransferase TrmFO from Bacillus cereus (strain G9842).